A 196-amino-acid chain; its full sequence is Superoxide dismutase [Fe] (196 aa).

Residues His20, His68, Asp157, and His161 each coordinate Fe cation.

It belongs to the iron/manganese superoxide dismutase family. As to quaternary structure, homotetramer. It depends on Fe cation as a cofactor.

It catalyses the reaction 2 superoxide + 2 H(+) = H2O2 + O2. Its function is as follows. Destroys superoxide anion radicals which are normally produced within the cells and which are toxic to biological systems. The sequence is that of Superoxide dismutase [Fe] from Tetrahymena pyriformis.